The sequence spans 494 residues: Probable cytosol aminopeptidase (494 aa).

Residues Lys-260 and Asp-265 each coordinate Mn(2+). Lys-272 is an active-site residue. 3 residues coordinate Mn(2+): Asp-283, Asp-342, and Glu-344. Arg-346 is a catalytic residue.

This sequence belongs to the peptidase M17 family. Requires Mn(2+) as cofactor.

It is found in the cytoplasm. It catalyses the reaction Release of an N-terminal amino acid, Xaa-|-Yaa-, in which Xaa is preferably Leu, but may be other amino acids including Pro although not Arg or Lys, and Yaa may be Pro. Amino acid amides and methyl esters are also readily hydrolyzed, but rates on arylamides are exceedingly low.. The catalysed reaction is Release of an N-terminal amino acid, preferentially leucine, but not glutamic or aspartic acids.. Presumably involved in the processing and regular turnover of intracellular proteins. Catalyzes the removal of unsubstituted N-terminal amino acids from various peptides. This Bacillus cereus (strain Q1) protein is Probable cytosol aminopeptidase.